The primary structure comprises 379 residues: Cytochrome b (379 aa).

The next 4 helical transmembrane spans lie at 33-53 (FGSL…FLAM), 77-98 (WTIR…FIHV), 113-133 (WNVG…GYVL), and 178-198 (FFAL…IHLL). Positions 83 and 97 each coordinate heme b. Residues His182 and His196 each coordinate heme b. Position 201 (His201) interacts with a ubiquinone. 4 helical membrane-spanning segments follow: residues 226 to 246 (TKDF…TLFY), 288 to 308 (LGGV…PLLQ), 320 to 340 (LSQF…WIGG), and 347 to 367 (FITI…LIMP).

It belongs to the cytochrome b family. The cytochrome bc1 complex contains 11 subunits: 3 respiratory subunits (MT-CYB, CYC1 and UQCRFS1), 2 core proteins (UQCRC1 and UQCRC2) and 6 low-molecular weight proteins (UQCRH/QCR6, UQCRB/QCR7, UQCRQ/QCR8, UQCR10/QCR9, UQCR11/QCR10 and a cleavage product of UQCRFS1). This cytochrome bc1 complex then forms a dimer. Heme b serves as cofactor.

It is found in the mitochondrion inner membrane. In terms of biological role, component of the ubiquinol-cytochrome c reductase complex (complex III or cytochrome b-c1 complex) that is part of the mitochondrial respiratory chain. The b-c1 complex mediates electron transfer from ubiquinol to cytochrome c. Contributes to the generation of a proton gradient across the mitochondrial membrane that is then used for ATP synthesis. In Lepilemur edwardsi (Milne-Edwards's sportive lemur), this protein is Cytochrome b (MT-CYB).